We begin with the raw amino-acid sequence, 448 residues long: Exodeoxyribonuclease 7 large subunit (448 aa).

It belongs to the XseA family. Heterooligomer composed of large and small subunits.

Its subcellular location is the cytoplasm. It catalyses the reaction Exonucleolytic cleavage in either 5'- to 3'- or 3'- to 5'-direction to yield nucleoside 5'-phosphates.. Bidirectionally degrades single-stranded DNA into large acid-insoluble oligonucleotides, which are then degraded further into small acid-soluble oligonucleotides. This Nitrosomonas eutropha (strain DSM 101675 / C91 / Nm57) protein is Exodeoxyribonuclease 7 large subunit.